The sequence spans 95 residues: Small ribosomal subunit protein bS6 (95 aa).

The protein belongs to the bacterial ribosomal protein bS6 family.

In terms of biological role, binds together with bS18 to 16S ribosomal RNA. This Bacillus cytotoxicus (strain DSM 22905 / CIP 110041 / 391-98 / NVH 391-98) protein is Small ribosomal subunit protein bS6.